A 414-amino-acid polypeptide reads, in one-letter code: DNA primase small subunit PriS (414 aa).

Residues Asp-98, Asp-100, and Asp-312 contribute to the active site.

This sequence belongs to the eukaryotic-type primase small subunit family. Heterodimer of a small subunit (PriS) and a large subunit (PriL). The cofactor is Mg(2+). It depends on Mn(2+) as a cofactor.

Functionally, catalytic subunit of DNA primase, an RNA polymerase that catalyzes the synthesis of short RNA molecules used as primers for DNA polymerase during DNA replication. The small subunit contains the primase catalytic core and has DNA synthesis activity on its own. Binding to the large subunit stabilizes and modulates the activity, increasing the rate of DNA synthesis while decreasing the length of the DNA fragments, and conferring RNA synthesis capability. The DNA polymerase activity may enable DNA primase to also catalyze primer extension after primer synthesis. May also play a role in DNA repair. The chain is DNA primase small subunit PriS from Methanosarcina barkeri (strain Fusaro / DSM 804).